The chain runs to 414 residues: Meiotic driver wtf19 (414 aa).

The tract at residues 1 to 94 is disordered; it reads MKNKYYPVRT…RENHSSGTAD (94 aa). Positions 11 to 29 are enriched in basic and acidic residues; sequence SMDEMNAKNDNEIDLEKGP. Residues 57 to 72 are compositionally biased toward polar residues; that stretch reads GANNPNLFNTDESTTP. The next 9 membrane-spanning stretches (helical) occupy residues 99-119, 136-156, 170-190, 192-212, 222-242, 247-267, 284-304, 311-331, and 339-359; these read FLIKLLISFIPIFVLNVPAVC, WVYFGVWCAICLMIFISLWCF, VTVIFLAQCIKVTVISLAQCV, VTAIFLAQCIKVTVISLAQCV, CVKVTVISLAKCVKVISIGLF, EMMIIIWILWLIICCILFGCV, TISAVLFLIVSSVCIPIWTLW, LQVLGIHGIIAVLVNGLMSLF, and GYEIEGFVLFFTSSALFLYEM.

Belongs to the WTF family. Homomer. Forms protein aggregates. The two isoforms can interact with each other and with themselves. High sequence similarity is required for their interaction.

It is found in the spore membrane. Its subcellular location is the vacuole membrane. The protein resides in the ascus epiplasm. The protein localises to the cytoplasm. It localises to the endoplasmic reticulum membrane. Functionally, promotes unequal transmission of alleles from the parental zygote to progeny spores by acting as poison/antidote system where the poison and antidote proteins are produced from the same locus; the poison component is trans-acting and targets all spores within an ascus whereas the antidote component is spore-specific, leading to poisoning of all progeny that do not inherit the allele. Its function is as follows. Localizes isoform 2 to the vacuole thereby facilitating its degradation. Forms toxic aggregates that disrupt spore maturation. In Schizosaccharomyces kambucha (Fission yeast), this protein is Meiotic driver wtf19.